Reading from the N-terminus, the 108-residue chain is uncharacterized protein (108 aa).

Positions 1 to 14 are enriched in polar residues; the sequence is MSDSNSRLVYSTET. Positions 1 to 31 are disordered; that stretch reads MSDSNSRLVYSTETGRIDEPKAAPVRPKGDG. Basic and acidic residues predominate over residues 15 to 31; sequence GRIDEPKAAPVRPKGDG.

Belongs to the SUI1 family.

This is an uncharacterized protein from Escherichia coli (strain K12).